The sequence spans 1972 residues: Myosin-11 (1972 aa).

S8, S23, and S40 each carry phosphoserine. The region spanning 31-81 is the Myosin N-terminal SH3-like domain; it reads VAKKLVWVPSEKQGFEAASIKEEKGDEVVVELVENGKKVTVGKDDIQKMNP. Residues 85–783 enclose the Myosin motor domain; the sequence is SKVEDMAELT…VLAHLEEERD (699 aa). K129 is modified (N6,N6,N6-trimethyllysine). An ATP-binding site is contributed by 178–185; that stretch reads GESGAGKT. Actin-binding stretches follow at residues 661 to 683 and 762 to 776; these read LGKLMATLRNTTANFVRCIIPNH and RIGQSKIFFRTGVLA. The IQ domain occupies 786–815; that stretch reads ITDVIMAFQAMCRGYLARKAFTKRQQQLTA. Positions 844–1934 form a coiled coil; it reads LLQVTRQEEE…KSKLRRGNEA (1091 aa). Position 1177 is a phosphothreonine (T1177). Phosphoserine occurs at positions 1684 and 1722. Positions 1771–1788 are enriched in polar residues; the sequence is NELATERSTAQKNESARQ. Disordered stretches follow at residues 1771-1797 and 1867-1972; these read NELATERSTAQKNESARQQLERQNKEL and QYKE…KASE. The segment covering 1867–1876 has biased composition (basic and acidic residues); the sequence is QYKEQAEKGN. The tract at residues 1935–1972 is C-terminal; the sequence is SFVPSRRAGGRRVIENTDGSEEEMDARDSDFNGTKASE. T1951 carries the phosphothreonine modification. A phosphoserine mark is found at S1954 and S1971.

It belongs to the TRAFAC class myosin-kinesin ATPase superfamily. Myosin family. Muscle myosin is a hexameric protein that consists of 2 heavy chain subunits (MHC), 2 alkali light chain subunits (MLC) and 2 regulatory light chain subunits (MLC-2).

The protein localises to the melanosome. It is found in the cytoplasm. It localises to the myofibril. Functionally, muscle contraction. The sequence is that of Myosin-11 (Myh11) from Mus musculus (Mouse).